We begin with the raw amino-acid sequence, 229 residues long: Large ribosomal subunit protein uL1 (229 aa).

The protein belongs to the universal ribosomal protein uL1 family. In terms of assembly, part of the 50S ribosomal subunit.

Binds directly to 23S rRNA. The L1 stalk is quite mobile in the ribosome, and is involved in E site tRNA release. In terms of biological role, protein L1 is also a translational repressor protein, it controls the translation of the L11 operon by binding to its mRNA. The sequence is that of Large ribosomal subunit protein uL1 from Streptococcus equi subsp. equi (strain 4047).